Consider the following 375-residue polypeptide: MENLCQRLNACQEKILDYYELDSNKLTDQIDYWKLVRYECAIFYKAREGNMQCINHQVVPSTVVCKQKAWQAIEIHIALQSLINTDYNTEAWTMRDTSYEMYMTEPKHCFKKEGTTVTVVFDCNKENTMDYIRWKYVYYKTDIGWCKGTGDVDAKGIYYTQGAYKQYYVDFKQEAEKYGTGVQWAVHVCGQVICCPEFVSSTCSSNQISTAKTAEPVSNATTQTTEAYVPVGTKETEAPYPGKRRRLSGPDTTVTTVTTVTTAATQPGQSVDYTNNNLHSTSGGHHPGRDTSSDQTVFIVHLKGDTNSLKCLRYRFKKHKGLYCNVSSTWHWTSNDTNQQGIVTITFNSITQRNNFLTTVKIPQSITSTLGIMSL.

The segment at 1-200 is transactivation domain; that stretch reads MENLCQRLNA…QVICCPEFVS (200 aa). The disordered stretch occupies residues 264 to 292; sequence ATQPGQSVDYTNNNLHSTSGGHHPGRDTS. The span at 266–283 shows a compositional bias: polar residues; it reads QPGQSVDYTNNNLHSTSG. Residues 296-375 are DNA-binding domain; the sequence is TVFIVHLKGD…ITSTLGIMSL (80 aa). A Glycyl lysine isopeptide (Lys-Gly) (interchain with G-Cter in SUMO) cross-link involves residue K303.

Belongs to the papillomaviridae E2 protein family. Binds DNA as homodimer. Interacts with protein E1; this interaction greatly increases E1 DNA-binding activity. Interacts with protein L1; this interaction enhances E2-dependent replication and transcription activation. Interacts with protein L2; this interaction inhibits E2 transcriptional activity but not DNA replication function E2. Interacts with protein E7; this interaction inhibits E7 oncogenic activity. Interacts with host TAF1; this interaction modulates E2-dependent transcriptional regulation. Interacts with host BRD4; this interaction mediates E2 transcriptional activation function. Additionally, the interaction with host BRD4 on mitotic chromosomes mediates tethering of the viral genome. Interacts with host TOPBP1; this interaction is required for optimal viral DNA replication. In terms of processing, phosphorylated. Sumoylation plays a regulatory role in E2 transcriptional activity.

It is found in the host nucleus. Functionally, plays a role in the initiation of viral DNA replication. A dimer of E2 interacts with a dimer of E1 in order to improve specificity of E1 DNA binding activity. Once the complex recognizes and binds DNA at specific sites, the E2 dimer is removed from DNA. E2 also regulates viral transcription through binding to the E2RE response element (5'-ACCNNNNNNGGT-3') present in multiple copies in the regulatory regions of the viral genome. Activates or represses transcription depending on E2RE's position with regards to proximal promoter elements including the TATA-box. Repression occurs by sterically hindering the assembly of the transcription initiation complex. This chain is Regulatory protein E2, found in Human papillomavirus type 26.